We begin with the raw amino-acid sequence, 131 residues long: Small ribosomal subunit protein uS19 (131 aa).

This sequence belongs to the universal ribosomal protein uS19 family.

Functionally, protein S19 forms a complex with S13 that binds strongly to the 16S ribosomal RNA. The chain is Small ribosomal subunit protein uS19 from Nitrosopumilus maritimus (strain SCM1).